Consider the following 612-residue polypeptide: DNA damage checkpoint protein 1 (612 aa).

Ser436 carries the phosphoserine modification. The tract at residues Gly576–Asp612 is disordered. Residues Ser585–Glu596 show a composition bias toward basic and acidic residues.

It belongs to the DDC1 family. As to quaternary structure, component of the checkpoint clamp complex composed of DDC1, MEC3 and RAD17. The interaction with MEC3 is performed in a RAD17-dependent manner. The checkpoint clamp complex loads onto DNA in an ATP-dependent manner through its interaction with the RFC-RAD4 checkpoint clamp loader complex. Interacts with the DNA polymerase zeta subunit REV7 and DPB11. Phosphorylated during cell cycle S-phase and in response to DNA damage. This phosphorylation is MEC14 dependent. Also hosphorylated by CDC28.

The protein localises to the cytoplasm. It is found in the nucleus. In terms of biological role, component of the checkpoint clamp complex involved in the surveillance mechanism that allows the DNA repair pathways to act to restore the integrity of the DNA prior to DNA synthesis or separation of the replicated chromosomes. Associates with sites of DNA damage and modulates the MEC1 signaling pathway and the activation of RAD53 in response to DNA damage at phase G1. The complex also physically regulates DNA polymerase zeta-dependent mutagenesis by controlling the access of polymerase zeta to damaged DNA. In Saccharomyces cerevisiae (strain ATCC 204508 / S288c) (Baker's yeast), this protein is DNA damage checkpoint protein 1 (DDC1).